The following is a 261-amino-acid chain: Glucose 1-dehydrogenase A (261 aa).

11–35 (VITGGSTGLGRAMAVRFGQEEAKVV) serves as a coordination point for NADP(+). Substrate is bound at residue S145. Catalysis depends on Y158, which acts as the Proton acceptor.

The protein belongs to the short-chain dehydrogenases/reductases (SDR) family. Homotetramer.

It catalyses the reaction D-glucose + NAD(+) = D-glucono-1,5-lactone + NADH + H(+). The enzyme catalyses D-glucose + NADP(+) = D-glucono-1,5-lactone + NADPH + H(+). This is Glucose 1-dehydrogenase A (gdhA) from Priestia megaterium (Bacillus megaterium).